Reading from the N-terminus, the 544-residue chain is Esterase-6 (544 aa).

Residues 1–21 form the signal peptide; the sequence is MNYVGLGLIIVLSCLWLGSNA. An N-linked (GlcNAc...) asparagine glycan is attached at N42. Cysteines 86 and 105 form a disulfide. S209 acts as the Acyl-ester intermediate in catalysis. The cysteines at positions 261 and 273 are disulfide-linked. N-linked (GlcNAc...) asparagine glycosylation is found at N420 and N456. The Charge relay system role is filled by H466. An N-linked (GlcNAc...) asparagine glycan is attached at N506. An intrachain disulfide couples C514 to C535.

It belongs to the type-B carboxylesterase/lipase family. Monomer. In terms of tissue distribution, specifically expressed in the ejaculatory bulbs of male.

The protein resides in the secreted. It carries out the reaction a carboxylic ester + H2O = an alcohol + a carboxylate + H(+). Transferred from the ejaculatory bulbs of males to the female genitals upon copulation, plays an important role in the reproductive biology. The chain is Esterase-6 (Est-6) from Drosophila melanogaster (Fruit fly).